The primary structure comprises 796 residues: MKHKLDVTINELRLKSIRKIVKRINTWSDEVKSYSDDALKQKTIEFKERLASGVDTLDTLLPEAYAVAREASWRVLGMYPKEVQLIGAIVLHEGNIAEMQTGEGKTLTATMPLYLNALSGKGTYLITTNDYLAKRDFEEMQPLYEWLGLTASLGFVDIVDYEYQKGEKRNIYEHDIIYTTNGRLGFDYLIDNLADSAEGKFLPQLNYGIIDEVDSIILDAAQTPLVISGAPRLQSNLFHIVKEFVDTLIEDVHFKMKKTKKEIWLLNQGIEAAQSYFNVEDLYSEQAMVLVRNINLALRAQYLFESNVDYFVYNGDIVLIDRITGRMLPGTKLQAGLHQAIEAKEGMEVSTDKSVMATITFQNLFKLFESFSGMTATGKLGESEFFDLYSKIVVQAPTDKAIQRIDEPDKVFRSVDEKNIAMIHDIVELHETGRPVLLITRTAEAAEYFSKVLFQMDIPNNLLIAQNVAKEAQMIAEAGQIGSMTVATSMAGRGTDIKLGEGVEALGGLAVIIHEHMENSRVDRQLRGRSGRQGDPGSSCIYISLDDYLVKRWSDSNLAENNQLYSLDAQRLSQSNLFNRKVKQIVVKAQRISEEQGVKAREMANEFEKSISIQRDLVYEERNRVLEIDDAENRDFKALAKDVFEMFVNEEKVLTKSRVVEYIYQNLSFQFNKDVACVNFKDKQAVVTFLLEQFEKQLALNRKNMQSAYYYNIFVQKVFLKAIDSCWLEQVDYLQQLKASVNQRQNGQRNAIFEYHRVALDSFEVMTRNIKKRMVKNICQSMITFDKEGMPVIHFP.

Residues Gln-84, 102 to 106 (GEGKT), and Asp-496 contribute to the ATP site.

The protein belongs to the SecA family. Monomer and homodimer. Part of the essential Sec protein translocation apparatus which comprises SecA, SecYEG and auxiliary proteins SecDF. Other proteins may also be involved.

The protein localises to the cell membrane. Its subcellular location is the cytoplasm. The enzyme catalyses ATP + H2O + cellular proteinSide 1 = ADP + phosphate + cellular proteinSide 2.. In terms of biological role, part of the Sec protein translocase complex. Interacts with the SecYEG preprotein conducting channel. Has a central role in coupling the hydrolysis of ATP to the transfer of proteins into and across the cell membrane, serving as an ATP-driven molecular motor driving the stepwise translocation of polypeptide chains across the membrane. The chain is Protein translocase subunit SecA 2 from Staphylococcus aureus (strain Mu3 / ATCC 700698).